We begin with the raw amino-acid sequence, 151 residues long: Regulatory protein RecX (151 aa).

This sequence belongs to the RecX family.

The protein localises to the cytoplasm. Modulates RecA activity. This chain is Regulatory protein RecX, found in Actinobacillus pleuropneumoniae serotype 5b (strain L20).